A 305-amino-acid chain; its full sequence is PI-PLC X domain-containing protein 1 (305 aa).

A signal peptide spans 1-24 (MSMSTLRHFLWLGALLLATIQVSA). One can recognise a PI-PLC X-box domain in the interval 25–189 (LPTAQDLICN…RLIVFVDSKA (165 aa)). Catalysis depends on residues His-53 and His-97. The N-linked (GlcNAc...) asparagine glycan is linked to Asn-237.

It localises to the secreted. This is PI-PLC X domain-containing protein 1 from Arthroderma benhamiae (strain ATCC MYA-4681 / CBS 112371) (Trichophyton mentagrophytes).